Consider the following 417-residue polypeptide: Serine hydroxymethyltransferase (417 aa).

(6S)-5,6,7,8-tetrahydrofolate contacts are provided by residues leucine 121 and 125–127 (GHL). At lysine 229 the chain carries N6-(pyridoxal phosphate)lysine. 355-357 (SPF) provides a ligand contact to (6S)-5,6,7,8-tetrahydrofolate.

This sequence belongs to the SHMT family. In terms of assembly, homodimer. It depends on pyridoxal 5'-phosphate as a cofactor.

The protein resides in the cytoplasm. It catalyses the reaction (6R)-5,10-methylene-5,6,7,8-tetrahydrofolate + glycine + H2O = (6S)-5,6,7,8-tetrahydrofolate + L-serine. It functions in the pathway one-carbon metabolism; tetrahydrofolate interconversion. Its pathway is amino-acid biosynthesis; glycine biosynthesis; glycine from L-serine: step 1/1. Catalyzes the reversible interconversion of serine and glycine with tetrahydrofolate (THF) serving as the one-carbon carrier. This reaction serves as the major source of one-carbon groups required for the biosynthesis of purines, thymidylate, methionine, and other important biomolecules. Also exhibits THF-independent aldolase activity toward beta-hydroxyamino acids, producing glycine and aldehydes, via a retro-aldol mechanism. This chain is Serine hydroxymethyltransferase, found in Salmonella schwarzengrund (strain CVM19633).